Consider the following 432-residue polypeptide: Short/branched chain specific acyl-CoA dehydrogenase, mitochondrial (432 aa).

Residues 1–33 (MAVSAFQLWRAGGLLRRNFLTHSSSWKIPPRVL) constitute a mitochondrion transit peptide. Lys-70 carries the N6-acetyllysine; alternate modification. Lys-70 carries the N6-succinyllysine; alternate modification. Residues 174–183 (FCLSEAGAGS) and 207–209 (WIS) contribute to the FAD site. Ser-183 is a substrate binding site. Ser-183 is subject to Phosphoserine. A substrate-binding site is contributed by Tyr-229. Lys-278 is modified (N6-succinyllysine). Residue Tyr-283 participates in substrate binding. Lys-284 carries the post-translational modification N6-acetyllysine; alternate. Lys-284 is subject to N6-succinyllysine; alternate. 291-294 (NEGR) contacts substrate. FAD contacts are provided by residues Arg-319, Gln-330, and 387 to 391 (EWMGG). The Proton acceptor role is filled by Glu-414. Position 416-418 (416-418 (TSN)) interacts with FAD. Lys-426 is subject to N6-acetyllysine.

This sequence belongs to the acyl-CoA dehydrogenase family. As to quaternary structure, homotetramer. The cofactor is FAD. Ubiquitously expressed.

The protein resides in the mitochondrion matrix. The catalysed reaction is 2-methylbutanoyl-CoA + oxidized [electron-transfer flavoprotein] + H(+) = (2E)-2-methylbut-2-enoyl-CoA + reduced [electron-transfer flavoprotein]. The enzyme catalyses (2S)-2-methylbutanoyl-CoA + oxidized [electron-transfer flavoprotein] + H(+) = (2E)-2-methylbut-2-enoyl-CoA + reduced [electron-transfer flavoprotein]. It catalyses the reaction (2R)-2-methylbutanoyl-CoA + oxidized [electron-transfer flavoprotein] + H(+) = ethylacryloyl-CoA + reduced [electron-transfer flavoprotein]. It carries out the reaction butanoyl-CoA + oxidized [electron-transfer flavoprotein] + H(+) = (2E)-butenoyl-CoA + reduced [electron-transfer flavoprotein]. The catalysed reaction is 2-methylpropanoyl-CoA + oxidized [electron-transfer flavoprotein] + H(+) = 2-methylpropenoyl-CoA + reduced [electron-transfer flavoprotein]. The enzyme catalyses hexanoyl-CoA + oxidized [electron-transfer flavoprotein] + H(+) = (2E)-hexenoyl-CoA + reduced [electron-transfer flavoprotein]. It catalyses the reaction valproyl-CoA + oxidized [electron-transfer flavoprotein] + H(+) = (2E)-2-propylpent-2-enoyl-CoA + reduced [electron-transfer flavoprotein]. The protein operates within lipid metabolism; mitochondrial fatty acid beta-oxidation. Its pathway is amino-acid degradation; L-isoleucine degradation. Its activity is regulated as follows. Inhibited by N-ethylmaleimide, hydroxymercuribenzoate, methyl mercury iodide and heavy metals such as Hg2+, Cu2+, and Ag2+. In terms of biological role, short and branched chain specific acyl-CoA dehydrogenase that catalyzes the removal of one hydrogen from C-2 and C-3 of the fatty acyl-CoA thioester, resulting in the formation of trans-2-enoyl-CoA. Among the different mitochondrial acyl-CoA dehydrogenases, acts specifically on short and branched chain acyl-CoA derivatives such as (S)-2-methylbutyryl-CoA as well as short straight chain acyl-CoAs such as butyryl-CoA. Plays an important role in the metabolism of L-isoleucine by catalyzing the dehydrogenation of 2-methylbutyryl-CoA, one of the steps of the L-isoleucine catabolic pathway. Can also act on valproyl-CoA, a metabolite of the valproic acid drug. The chain is Short/branched chain specific acyl-CoA dehydrogenase, mitochondrial from Rattus norvegicus (Rat).